The following is a 138-amino-acid chain: NADH-quinone oxidoreductase subunit A 1 (138 aa).

3 helical membrane passes run 19-39 (FLPL…LLLA), 74-94 (FYLI…IFAW), and 103-123 (LAGL…LVWL).

It belongs to the complex I subunit 3 family. In terms of assembly, NDH-1 is composed of 14 different subunits. Subunits NuoA, H, J, K, L, M, N constitute the membrane sector of the complex.

The protein resides in the cell inner membrane. The catalysed reaction is a quinone + NADH + 5 H(+)(in) = a quinol + NAD(+) + 4 H(+)(out). Its function is as follows. NDH-1 shuttles electrons from NADH, via FMN and iron-sulfur (Fe-S) centers, to quinones in the respiratory chain. The immediate electron acceptor for the enzyme in this species is believed to be ubiquinone. Couples the redox reaction to proton translocation (for every two electrons transferred, four hydrogen ions are translocated across the cytoplasmic membrane), and thus conserves the redox energy in a proton gradient. This is NADH-quinone oxidoreductase subunit A 1 from Geobacter metallireducens (strain ATCC 53774 / DSM 7210 / GS-15).